The chain runs to 375 residues: Alanine racemase (375 aa).

The Proton acceptor; specific for D-alanine role is filled by K45. An N6-(pyridoxal phosphate)lysine modification is found at K45. R141 contacts substrate. Residue Y270 is the Proton acceptor; specific for L-alanine of the active site. Substrate is bound at residue M318.

It belongs to the alanine racemase family. Requires pyridoxal 5'-phosphate as cofactor.

It carries out the reaction L-alanine = D-alanine. It participates in amino-acid biosynthesis; D-alanine biosynthesis; D-alanine from L-alanine: step 1/1. Its function is as follows. Catalyzes the interconversion of L-alanine and D-alanine. May also act on other amino acids. In Pseudoalteromonas atlantica (strain T6c / ATCC BAA-1087), this protein is Alanine racemase (alr).